The sequence spans 427 residues: Glutamate-1-semialdehyde 2,1-aminomutase 2 (427 aa).

The residue at position 267 (Lys267) is an N6-(pyridoxal phosphate)lysine.

The protein belongs to the class-III pyridoxal-phosphate-dependent aminotransferase family. HemL subfamily. In terms of assembly, homodimer. Pyridoxal 5'-phosphate serves as cofactor.

The protein resides in the cytoplasm. It catalyses the reaction (S)-4-amino-5-oxopentanoate = 5-aminolevulinate. The protein operates within porphyrin-containing compound metabolism; protoporphyrin-IX biosynthesis; 5-aminolevulinate from L-glutamyl-tRNA(Glu): step 2/2. This chain is Glutamate-1-semialdehyde 2,1-aminomutase 2, found in Staphylococcus saprophyticus subsp. saprophyticus (strain ATCC 15305 / DSM 20229 / NCIMB 8711 / NCTC 7292 / S-41).